Consider the following 109-residue polypeptide: Nucleoid-associated protein Caul_4574 (109 aa).

Belongs to the YbaB/EbfC family. As to quaternary structure, homodimer.

It localises to the cytoplasm. It is found in the nucleoid. Functionally, binds to DNA and alters its conformation. May be involved in regulation of gene expression, nucleoid organization and DNA protection. The protein is Nucleoid-associated protein Caul_4574 of Caulobacter sp. (strain K31).